We begin with the raw amino-acid sequence, 93 residues long: Phosphoribosyl-ATP pyrophosphatase (93 aa).

The protein belongs to the PRA-PH family.

It localises to the cytoplasm. It catalyses the reaction 1-(5-phospho-beta-D-ribosyl)-ATP + H2O = 1-(5-phospho-beta-D-ribosyl)-5'-AMP + diphosphate + H(+). It functions in the pathway amino-acid biosynthesis; L-histidine biosynthesis; L-histidine from 5-phospho-alpha-D-ribose 1-diphosphate: step 2/9. This Rhodococcus erythropolis (strain PR4 / NBRC 100887) protein is Phosphoribosyl-ATP pyrophosphatase.